The sequence spans 540 residues: CTP synthase (540 aa).

Residues 1–273 (MNNKDLKTKF…DDFILQHFKL (273 aa)) form an amidoligase domain region. Serine 19 contributes to the CTP binding site. UTP is bound at residue serine 19. 20-25 (SLGKGI) provides a ligand contact to ATP. Position 60 (tyrosine 60) interacts with L-glutamine. Residue aspartate 77 coordinates ATP. The Mg(2+) site is built by aspartate 77 and glutamate 147. CTP-binding positions include 154–156 (DIE), 194–199 (KTKPTQ), and lysine 230. UTP contacts are provided by residues 194–199 (KTKPTQ) and lysine 230. The Glutamine amidotransferase type-1 domain maps to 306–539 (YIVLHDAYLS…VEASLLNQKN (234 aa)). An L-glutamine-binding site is contributed by glycine 361. The active-site Nucleophile; for glutamine hydrolysis is the cysteine 388. Residues 389–392 (LGMQ), glutamate 412, and arginine 466 each bind L-glutamine. Residues histidine 512 and glutamate 514 contribute to the active site.

It belongs to the CTP synthase family. Homotetramer.

It catalyses the reaction UTP + L-glutamine + ATP + H2O = CTP + L-glutamate + ADP + phosphate + 2 H(+). It carries out the reaction L-glutamine + H2O = L-glutamate + NH4(+). The enzyme catalyses UTP + NH4(+) + ATP = CTP + ADP + phosphate + 2 H(+). The protein operates within pyrimidine metabolism; CTP biosynthesis via de novo pathway; CTP from UDP: step 2/2. Its activity is regulated as follows. Allosterically activated by GTP, when glutamine is the substrate; GTP has no effect on the reaction when ammonia is the substrate. The allosteric effector GTP functions by stabilizing the protein conformation that binds the tetrahedral intermediate(s) formed during glutamine hydrolysis. Inhibited by the product CTP, via allosteric rather than competitive inhibition. Its function is as follows. Catalyzes the ATP-dependent amination of UTP to CTP with either L-glutamine or ammonia as the source of nitrogen. Regulates intracellular CTP levels through interactions with the four ribonucleotide triphosphates. This Onion yellows phytoplasma (strain OY-M) protein is CTP synthase.